The sequence spans 469 residues: Protein POLLENLESS 3-LIKE 1 (469 aa).

The interval 1–20 (MRRRESRGAKGGGFLTPPPS) is disordered. 3 TPR repeats span residues 88-121 (DSAL…CPFE), 124-157 (DSID…LEQD), and 184-217 (ARIL…EPDN). Positions 139–191 (RITEVAELLEHKLRTLEQDKHYGGRIKIAKRSHEEQNNKTIEQEKARILGNLA) form a coiled coil. The segment covering 314–338 (NIHKTNSHASSESVEQNSPGLTTQP) has biased composition (polar residues). A disordered region spans residues 314 to 339 (NIHKTNSHASSESVEQNSPGLTTQPR).

This sequence belongs to the MS5 protein family. Expressed in floral and vegetative organs. Also barely detectable in leaves and stems.

It localises to the nucleus. In terms of biological role, probably involved in the regulation of cell division. The polypeptide is Protein POLLENLESS 3-LIKE 1 (Arabidopsis thaliana (Mouse-ear cress)).